We begin with the raw amino-acid sequence, 116 residues long: Large ribosomal subunit protein bL20 (116 aa).

This sequence belongs to the bacterial ribosomal protein bL20 family.

Binds directly to 23S ribosomal RNA and is necessary for the in vitro assembly process of the 50S ribosomal subunit. It is not involved in the protein synthesizing functions of that subunit. This is Large ribosomal subunit protein bL20 from Hydrogenobaculum sp. (strain Y04AAS1).